The sequence spans 338 residues: Glycerol-3-phosphate dehydrogenase [NAD(P)+] (338 aa).

NADPH-binding residues include Ser-11, Trp-12, His-32, His-33, and Lys-109. Sn-glycerol 3-phosphate is bound by residues Lys-109, Gly-140, and Ser-142. Ala-144 provides a ligand contact to NADPH. Sn-glycerol 3-phosphate is bound by residues Lys-195, Asp-248, Ser-258, Arg-259, and Asn-260. Lys-195 functions as the Proton acceptor in the catalytic mechanism. Position 259 (Arg-259) interacts with NADPH. NADPH is bound by residues Val-283 and Glu-285.

This sequence belongs to the NAD-dependent glycerol-3-phosphate dehydrogenase family.

Its subcellular location is the cytoplasm. The catalysed reaction is sn-glycerol 3-phosphate + NAD(+) = dihydroxyacetone phosphate + NADH + H(+). It catalyses the reaction sn-glycerol 3-phosphate + NADP(+) = dihydroxyacetone phosphate + NADPH + H(+). It participates in membrane lipid metabolism; glycerophospholipid metabolism. Catalyzes the reduction of the glycolytic intermediate dihydroxyacetone phosphate (DHAP) to sn-glycerol 3-phosphate (G3P), the key precursor for phospholipid synthesis. This is Glycerol-3-phosphate dehydrogenase [NAD(P)+] from Leuconostoc citreum (strain KM20).